A 389-amino-acid chain; its full sequence is Phospho-N-acetylmuramoyl-pentapeptide-transferase (389 aa).

10 helical membrane passes run 25–45 (RAVMASLTALVIGLGFGPFVI), 74–94 (MGGVLVLIGIAVSTLLWADWG), 97–117 (FIWIVLLVTLGYGAIGWVDDY), 134–154 (FFWQTVIGLFAAAYLAFSVSE), 190–210 (ISYPLGVFGFIILTYLVIVGS), 222–242 (GLVIMPVVLVGSALGVFAYVM), 259–279 (AGELLIFCSAMAGAGLAFLWF), 286–306 (VFMGDVGALALGGALGTIAVI), 311–331 (IVLFIMGGIFVAETVSVMLQV), and 366–386 (QVVVRFWVITMMLVLIGLSTL).

Belongs to the glycosyltransferase 4 family. MraY subfamily. It depends on Mg(2+) as a cofactor.

Its subcellular location is the cell inner membrane. The enzyme catalyses UDP-N-acetyl-alpha-D-muramoyl-L-alanyl-gamma-D-glutamyl-meso-2,6-diaminopimeloyl-D-alanyl-D-alanine + di-trans,octa-cis-undecaprenyl phosphate = di-trans,octa-cis-undecaprenyl diphospho-N-acetyl-alpha-D-muramoyl-L-alanyl-D-glutamyl-meso-2,6-diaminopimeloyl-D-alanyl-D-alanine + UMP. It functions in the pathway cell wall biogenesis; peptidoglycan biosynthesis. Functionally, catalyzes the initial step of the lipid cycle reactions in the biosynthesis of the cell wall peptidoglycan: transfers peptidoglycan precursor phospho-MurNAc-pentapeptide from UDP-MurNAc-pentapeptide onto the lipid carrier undecaprenyl phosphate, yielding undecaprenyl-pyrophosphoryl-MurNAc-pentapeptide, known as lipid I. This chain is Phospho-N-acetylmuramoyl-pentapeptide-transferase, found in Ralstonia pickettii (strain 12J).